The sequence spans 440 residues: MSLSNKTVKELRQLLKERYTVEDELTESIALSSMRFKPSQEPEFHALSQSSLLKTKLKQQSSTDIPSYTHVLISKLSCEKITHYAVRGGNIEIMGILMGFTLKDNIVVMDCFNLPVVGTETRVNAQLESYEYMVQYIDEMYNHNDGGDGRDYKGAKLNVVGWFHSHPGYDCWLSNIDIQTQDLNQRFQDPYVAIVVDPLKSLEDKILRMGAFRTIESKSDDNSATSYYELETIIFDSELNRALFETKLNLHCVIEDDESEQISLNRLIDSMKQYSYLMDSKNVRTRIKLATTSERVSNENKKNIDYQNRSTRSQFCLNTQRGDSTETSSFGSMFSGDNTSDVDMEDRNLTEFDSTDTSLCINGEPSIHVNRVERSSRSTDNFHNSKKRMNSNQERCHDEGNDMLQRNVLETDYARAKNRILASKIKQYERLRFYKDTFTL.

Positions V71–K218 constitute an MPN domain. Residues H164, H166, and D177 each coordinate Zn(2+). Residues H164–D177 carry the JAMM motif motif. The span at T319–D341 shows a compositional bias: polar residues. Disordered stretches follow at residues T319 to D343 and S375 to E399.

The protein belongs to the peptidase M67A family. CSN5 subfamily. As to quaternary structure, component of a COP9 signalosome-like (CSN) complex, composed of at least RRI1/CSN5, CSN9, RRI2/CSN10, PCI8/CSN11, CSN12 and CSI1. Within this complex it probably interacts directly with CSN12. Also interacts with RPN5. A divalent metal cation is required as a cofactor.

It localises to the cytoplasm. It is found in the nucleus. Its function is as follows. Catalytic component of the COP9 signalosome (CSN) complex that acts as an regulator of the ubiquitin (Ubl) conjugation pathway by mediating the deneddylation of the cullin subunit of SCF-type E3 ubiquitin-protein ligase complexes. The CSN complex is involved in the regulation of the mating pheromone response. The sequence is that of COP9 signalosome complex subunit 5 (RRI1) from Saccharomyces cerevisiae (strain ATCC 204508 / S288c) (Baker's yeast).